We begin with the raw amino-acid sequence, 237 residues long: NAD-dependent protein deacetylase (237 aa).

In terms of domain architecture, Deacetylase sirtuin-type spans 1-237 (MFTTSLRQAQ…LVETNRALQK (237 aa)). NAD(+) contacts are provided by Ala18, Thr22, Phe29, Arg30, Gln95, Asp98, and His113. Phe29 contacts nicotinamide. Asp98 contributes to the nicotinamide binding site. His113 (proton acceptor) is an active-site residue. Residues Cys121, Cys124, Cys140, and Cys142 each coordinate Zn(2+). NAD(+) is bound by residues Ser180, Ser181, Asn205, and Ile224.

It belongs to the sirtuin family. Class U subfamily. The cofactor is Zn(2+).

The protein localises to the cytoplasm. The catalysed reaction is N(6)-acetyl-L-lysyl-[protein] + NAD(+) + H2O = 2''-O-acetyl-ADP-D-ribose + nicotinamide + L-lysyl-[protein]. Its function is as follows. NAD-dependent protein deacetylase which modulates the activities of several enzymes which are inactive in their acetylated form. The chain is NAD-dependent protein deacetylase from Shouchella clausii (strain KSM-K16) (Alkalihalobacillus clausii).